The primary structure comprises 675 residues: MVNAMVERATSEMLIGPDWAMNLEICDMLNSDPAQAKDVVKGIKKRIGSRNPKAQLLALTLLETIVKNCGDMVHMHVAEKGVIHEMVRIVKKKPDFHVKEKILVLIDTWQEAFGGPRARYPQYYAGYQELLRAGAVFPQRSERSAPVFTPPQTQPLTSYPPNLRNAGPGNDVPEPSAEPEFPTLSLSEIQNAKGIMDVLAEMLSALEPGNKEDLKQEVMVDLVEQCRTYKQRVVHLVNSTSDESLLCQGLALNDDLQRVLTNYEAIASGLPGTSSQIEKPKSETGKSLVDVDGPLIDTGDSSNQANGATSSSGNGVLNQLALPAPPVTNGSANSKIDLLSGDDLALVPVGPPQPASPVASDQNALALIDMFSDNTNNPSPATAPSGNPAQNIPLNPQGHQQPNSQAGEAGLQQSNGFAPQVGYSQFEQPSYGQGVSSPWSSQPAQQPVQPSYGAQDSTAFPPPPWEAQLQDYSPSAESGSPFSPGMHPTQTAFTHAQPVNNNNPYPQIPQTGPPVNNNSPYAQMPQTGQAVANISPYPQIPQNGVYMPNQPNQALGSGYQPQQQQQQQMMMAQYYAQQQQLQQQQQQQAYGNQMGGYGYGYNQQQQGSSPYLDQQMYGLSMRDQTSHQVASSSSTTSYLPPMKPKNKPEDKLFGDLVDISKFKPTKPTSGRAGTM.

Residues 9–138 (ATSEMLIGPD…ELLRAGAVFP (130 aa)) form the VHS domain. 5 disordered regions span residues 144–181 (SAPV…EPEF), 270–322 (LPGT…QLAL), 371–524 (FSDN…YAQM), 542–561 (QNGV…GYQP), and 622–675 (RDQT…AGTM). One can recognise a GAT domain in the interval 180 to 268 (EFPTLSLSEI…VLTNYEAIAS (89 aa)). 2 stretches are compositionally biased toward polar residues: residues 299 to 317 (GDSS…NGVL) and 372 to 435 (SDNT…GQGV). The segment covering 436 to 451 (SSPWSSQPAQQPVQPS) has biased composition (low complexity). Polar residues-rich tracts occupy residues 470–481 (QDYSPSAESGSP) and 488–524 (PTQT…YAQM). Over residues 646-661 (NKPEDKLFGDLVDISK) the composition is skewed to basic and acidic residues.

Belongs to the TOM1 family. In terms of assembly, interacts with ELC/VPS23A and ELCL/VPS23B. In terms of tissue distribution, ubiquitously expressed.

It localises to the cytoplasm. The protein localises to the membrane. Functionally, might contribute to the loading of the ESCRT machinery. This chain is TOM1-like protein 9, found in Arabidopsis thaliana (Mouse-ear cress).